Here is a 66-residue protein sequence, read N- to C-terminus: Protein translocase subunit SecE (66 aa).

Residues 34 to 54 (LVVIVAVFVFSLICLVLDYGI) form a helical membrane-spanning segment.

The protein belongs to the SecE/SEC61-gamma family. As to quaternary structure, component of the Sec protein translocase complex. Heterotrimer consisting of SecY, SecE and SecG subunits. The heterotrimers can form oligomers, although 1 heterotrimer is thought to be able to translocate proteins. Interacts with the ribosome. Interacts with SecDF, and other proteins may be involved. Interacts with SecA.

The protein localises to the cell inner membrane. Functionally, essential subunit of the Sec protein translocation channel SecYEG. Clamps together the 2 halves of SecY. May contact the channel plug during translocation. The sequence is that of Protein translocase subunit SecE from Rickettsia bellii (strain RML369-C).